A 458-amino-acid polypeptide reads, in one-letter code: N-acetylgalactosamine kinase (458 aa).

Residues arginine 43, glutamate 49, histidine 50, and aspartate 52 each coordinate alpha-D-galactose. 3 residues coordinate ATP: glycine 143, serine 145, and serine 146. Alpha-D-galactose is bound at residue aspartate 190. Aspartate 190 acts as the Proton acceptor in catalysis. Positions 233 and 234 each coordinate ATP.

It belongs to the GHMP kinase family. GalK subfamily. As to quaternary structure, monomer.

The enzyme catalyses N-acetyl-alpha-D-galactosamine + ATP = N-acetyl-alpha-D-galactosamine 1-phosphate + ADP + H(+). Functionally, acts on GalNAc. Also acts as a galactokinase when galactose is present at high concentrations. The polypeptide is N-acetylgalactosamine kinase (GALK2) (Pongo abelii (Sumatran orangutan)).